We begin with the raw amino-acid sequence, 143 residues long: Large ribosomal subunit protein uL16 (143 aa).

It belongs to the universal ribosomal protein uL16 family. As to quaternary structure, part of the 50S ribosomal subunit.

Binds 23S rRNA and is also seen to make contacts with the A and possibly P site tRNAs. The sequence is that of Large ribosomal subunit protein uL16 from Thermosynechococcus vestitus (strain NIES-2133 / IAM M-273 / BP-1).